We begin with the raw amino-acid sequence, 174 residues long: Adipose-secreted signaling protein (174 aa).

Position 2 is an N-acetylalanine (Ala-2). At Thr-147 the chain carries Phosphothreonine.

It belongs to the ADISSP family.

It is found in the secreted. Functionally, adipocyte-secreted protein (adipokine) that acts as a key regulator for white adipose tissue (WAT) thermogenesis and glucose homeostasis at least in part through activation of protein kinase A (PKA). The chain is Adipose-secreted signaling protein from Rattus norvegicus (Rat).